The sequence spans 94 residues: Sec-independent protein translocase protein TatA (94 aa).

Residues M1–F21 traverse the membrane as a helical segment. The tract at residues A44 to R94 is disordered. Positions T62 to I72 are enriched in polar residues.

The protein belongs to the TatA/E family. In terms of assembly, the Tat system comprises two distinct complexes: a TatABC complex, containing multiple copies of TatA, TatB and TatC subunits, and a separate TatA complex, containing only TatA subunits. Substrates initially bind to the TatABC complex, which probably triggers association of the separate TatA complex to form the active translocon.

The protein localises to the cell membrane. Functionally, part of the twin-arginine translocation (Tat) system that transports large folded proteins containing a characteristic twin-arginine motif in their signal peptide across membranes. TatA could form the protein-conducting channel of the Tat system. The polypeptide is Sec-independent protein translocase protein TatA (Streptomyces avermitilis (strain ATCC 31267 / DSM 46492 / JCM 5070 / NBRC 14893 / NCIMB 12804 / NRRL 8165 / MA-4680)).